Consider the following 263-residue polypeptide: Syntaxin-73 (263 aa).

Topologically, residues 1–240 (MGVIDLITRV…TVTKLRSSRN (240 aa)) are cytoplasmic. A Phosphoserine modification is found at serine 12. Positions 169–231 (YEMKRIKQAR…KSTNVRLKDT (63 aa)) constitute a t-SNARE coiled-coil homology domain. A helical; Anchor for type IV membrane protein transmembrane segment spans residues 241–261 (FCIDIILLCILLGIAAFIYNS). At 262–263 (VK) the chain is on the vesicular side.

The protein belongs to the syntaxin family. In terms of assembly, part of the t-SNARE complex. As to expression, expressed in root, leaf, stem, flower and silique.

The protein resides in the membrane. Vesicle trafficking protein that functions in the secretory pathway. This is Syntaxin-73 (SYP73) from Arabidopsis thaliana (Mouse-ear cress).